A 191-amino-acid polypeptide reads, in one-letter code: Putative glutathione-dependent formaldehyde-activating enzyme (191 aa).

The region spanning 20–166 is the CENP-V/GFA domain; it reads FAGGKLRCHC…FKALGLQTYD (147 aa). Positions 27, 29, 48, 50, 53, 95, and 98 each coordinate Zn(2+).

It belongs to the Gfa family. Requires Zn(2+) as cofactor.

The enzyme catalyses S-(hydroxymethyl)glutathione = glutathione + formaldehyde. It functions in the pathway one-carbon metabolism; formaldehyde degradation; formate from formaldehyde (glutathione route): step 1/3. Catalyzes the condensation of formaldehyde and glutathione to S-hydroxymethylglutathione. In Penicillium rubens (strain ATCC 28089 / DSM 1075 / NRRL 1951 / Wisconsin 54-1255) (Penicillium chrysogenum), this protein is Putative glutathione-dependent formaldehyde-activating enzyme.